A 439-amino-acid polypeptide reads, in one-letter code: Elongation factor 1-alpha 2 (439 aa).

The region spanning 6–229 is the tr-type G domain; it reads KDHLNLVVIG…DEFKVPKRPI (224 aa). Residues 15-22 are G1; sequence GHVDSGKS. Residue 15–22 coordinates GTP; that stretch reads GHVDSGKS. Residues 71–75 are G2; it reads GITIN. The G3 stretch occupies residues 92-95; that stretch reads DAPG. GTP is bound by residues 92–96 and 154–157; these read DAPGH and NKMD. The tract at residues 154–157 is G4; it reads NKMD. Residues 193–195 are G5; it reads SGF.

This sequence belongs to the TRAFAC class translation factor GTPase superfamily. Classic translation factor GTPase family. EF-Tu/EF-1A subfamily.

The protein localises to the cytoplasm. Its function is as follows. This protein promotes the GTP-dependent binding of aminoacyl-tRNA to the A-site of ribosomes during protein biosynthesis. The polypeptide is Elongation factor 1-alpha 2 (EFA2) (Euplotes crassus).